Reading from the N-terminus, the 117-residue chain is Large ribosomal subunit protein uL18 (117 aa).

This sequence belongs to the universal ribosomal protein uL18 family. In terms of assembly, part of the 50S ribosomal subunit; part of the 5S rRNA/L5/L18/L25 subcomplex. Contacts the 5S and 23S rRNAs.

Functionally, this is one of the proteins that bind and probably mediate the attachment of the 5S RNA into the large ribosomal subunit, where it forms part of the central protuberance. The sequence is that of Large ribosomal subunit protein uL18 from Buchnera aphidicola subsp. Acyrthosiphon kondoi (Acyrthosiphon kondoi symbiotic bacterium).